Consider the following 645-residue polypeptide: E3 ubiquitin-protein ligase ORTHRUS 2 (645 aa).

The PHD-type zinc-finger motif lies at 12 to 63 (DGVCMRCKSNPPPEESLTCGTCVTPWHVSCLSSPPKTLASTLQWHCPDCSGE). The tract at residues 96-133 (LSTEEKAKMRQRLLSGKGVEEDDEEEKRKKKGKGKNPN) is disordered. An RING-type 1 zinc finger spans residues 146-185 (CSFCMQLPERPVTKPCGHNACLKCFEKWMGQGKRTCGKCR). Residues 273–422 (VRNQGLLVGE…FKVCRYLFVR (150 aa)) enclose the YDG domain. Residues 518 to 575 (CQICQQVLTLPVTTPCAHNFCKACLEAKFAGKTLVRERSTGGRTLRSRKNVLNCPCCP) form an RING-type 2 zinc finger. A coiled-coil region spans residues 583–613 (QNPQVNREVAEVIEKLKTQEEDTAELEDEDE). The tract at residues 599-645 (KTQEEDTAELEDEDEGECSGTTPEEDSEQPKKRIKLDTDATVSATIR) is disordered. The span at 603-625 (EDTAELEDEDEGECSGTTPEEDS) shows a compositional bias: acidic residues. Positions 626–636 (EQPKKRIKLDT) are enriched in basic and acidic residues.

As to quaternary structure, interacts with histones CENH3, HTB2, HTR3 and H4. In terms of tissue distribution, mostly expressed in inflorescence and, to a lower extent, in leaves.

Its subcellular location is the nucleus. It catalyses the reaction S-ubiquitinyl-[E2 ubiquitin-conjugating enzyme]-L-cysteine + [acceptor protein]-L-lysine = [E2 ubiquitin-conjugating enzyme]-L-cysteine + N(6)-ubiquitinyl-[acceptor protein]-L-lysine.. It participates in protein modification; protein ubiquitination. In terms of biological role, E3 ubiquitin-protein ligase. Participates in CpG methylation-dependent transcriptional regulation and epigenetic transcriptional silencing. Mediates ubiquitination with the E2 ubiquitin-conjugating enzyme UBC11. Promotes methylation-mediated gene silencing leading, for example, to early flowering. Associates with methylated DNA, and can bind to CpG, CpNpG, and CpNpN DNA motifs, with a strong preference for methylated forms, and with highest affinity for CpG substrate. Probably acts at the DNA methylation?histone interface to maintain centromeric heterochromatin. This is E3 ubiquitin-protein ligase ORTHRUS 2 (ORTH2) from Arabidopsis thaliana (Mouse-ear cress).